The following is a 442-amino-acid chain: tRNA modification GTPase MnmE (442 aa).

Residues R23, E82, and K121 each coordinate (6S)-5-formyl-5,6,7,8-tetrahydrofolate. The TrmE-type G domain maps to 215-364 (GTSLILAGKP…VKQALIQWMQ (150 aa)). N225 contributes to the K(+) binding site. GTP-binding positions include 225 to 230 (NVGKSS), 244 to 250 (THIPGTT), 269 to 272 (DTAG), and 325 to 328 (NKAD). S229 is a Mg(2+) binding site. T244, I246, and T249 together coordinate K(+). Residue T250 participates in Mg(2+) binding. K442 lines the (6S)-5-formyl-5,6,7,8-tetrahydrofolate pocket.

Belongs to the TRAFAC class TrmE-Era-EngA-EngB-Septin-like GTPase superfamily. TrmE GTPase family. In terms of assembly, homodimer. Heterotetramer of two MnmE and two MnmG subunits. Requires K(+) as cofactor.

The protein localises to the cytoplasm. In terms of biological role, exhibits a very high intrinsic GTPase hydrolysis rate. Involved in the addition of a carboxymethylaminomethyl (cmnm) group at the wobble position (U34) of certain tRNAs, forming tRNA-cmnm(5)s(2)U34. This Chlamydia pneumoniae (Chlamydophila pneumoniae) protein is tRNA modification GTPase MnmE.